Here is a 200-residue protein sequence, read N- to C-terminus: Holliday junction branch migration complex subunit RuvA (200 aa).

A domain I region spans residues 1–63; the sequence is MIALLTGQIA…EDAILLYGFR (63 aa). Positions 64–142 are domain II; that stretch reads TRTEKSFFQL…KLDSGSIPAG (79 aa). The flexible linker stretch occupies residues 143 to 153; that stretch reads DAVGRSLPAGS. The interval 153 to 200 is domain III; sequence SVLDDVSSALVNLGYKDPQVRKVLAELDCAGSASVEEVLKQALKILMK.

Belongs to the RuvA family. In terms of assembly, homotetramer. Forms an RuvA(8)-RuvB(12)-Holliday junction (HJ) complex. HJ DNA is sandwiched between 2 RuvA tetramers; dsDNA enters through RuvA and exits via RuvB. An RuvB hexamer assembles on each DNA strand where it exits the tetramer. Each RuvB hexamer is contacted by two RuvA subunits (via domain III) on 2 adjacent RuvB subunits; this complex drives branch migration. In the full resolvosome a probable DNA-RuvA(4)-RuvB(12)-RuvC(2) complex forms which resolves the HJ.

The protein resides in the cytoplasm. Its function is as follows. The RuvA-RuvB-RuvC complex processes Holliday junction (HJ) DNA during genetic recombination and DNA repair, while the RuvA-RuvB complex plays an important role in the rescue of blocked DNA replication forks via replication fork reversal (RFR). RuvA specifically binds to HJ cruciform DNA, conferring on it an open structure. The RuvB hexamer acts as an ATP-dependent pump, pulling dsDNA into and through the RuvAB complex. HJ branch migration allows RuvC to scan DNA until it finds its consensus sequence, where it cleaves and resolves the cruciform DNA. The protein is Holliday junction branch migration complex subunit RuvA of Trichlorobacter lovleyi (strain ATCC BAA-1151 / DSM 17278 / SZ) (Geobacter lovleyi).